A 176-amino-acid chain; its full sequence is NAD(P)H-quinone oxidoreductase subunit 6, chloroplastic (176 aa).

The next 5 membrane-spanning stretches (helical) occupy residues 10–30, 32–52, 61–81, 92–112, and 152–172; these read FLLVFLGSGLIVGGLGVVLLT, PIFSAFSLGLVLVCISLFFSL, AQLLIYVGAINVLILFAVMFM, LWTVGDGITSLVCTSIFISLI, and FFLPFELISIILLVSLIGAIA.

Belongs to the complex I subunit 6 family. As to quaternary structure, NDH is composed of at least 16 different subunits, 5 of which are encoded in the nucleus.

It is found in the plastid. The protein resides in the chloroplast thylakoid membrane. The catalysed reaction is a plastoquinone + NADH + (n+1) H(+)(in) = a plastoquinol + NAD(+) + n H(+)(out). It carries out the reaction a plastoquinone + NADPH + (n+1) H(+)(in) = a plastoquinol + NADP(+) + n H(+)(out). NDH shuttles electrons from NAD(P)H:plastoquinone, via FMN and iron-sulfur (Fe-S) centers, to quinones in the photosynthetic chain and possibly in a chloroplast respiratory chain. The immediate electron acceptor for the enzyme in this species is believed to be plastoquinone. Couples the redox reaction to proton translocation, and thus conserves the redox energy in a proton gradient. The chain is NAD(P)H-quinone oxidoreductase subunit 6, chloroplastic (ndhG) from Oenothera argillicola (Appalachian evening primrose).